Consider the following 268-residue polypeptide: Phosphatidylglycerol--prolipoprotein diacylglyceryl transferase (268 aa).

4 consecutive transmembrane segments (helical) span residues 14-34 (LGPI…FAGW), 57-77 (LTFY…IIFY), 90-110 (FFLW…LIAF), and 117-137 (IGAN…IGLG). Arg140 provides a ligand contact to a 1,2-diacyl-sn-glycero-3-phospho-(1'-sn-glycerol). A run of 3 helical transmembrane segments spans residues 174–194 (QLFE…LVTI), 200–220 (YLVL…CEFF), and 240–260 (ILSI…FIKI).

It belongs to the Lgt family.

The protein localises to the cell inner membrane. The enzyme catalyses L-cysteinyl-[prolipoprotein] + a 1,2-diacyl-sn-glycero-3-phospho-(1'-sn-glycerol) = an S-1,2-diacyl-sn-glyceryl-L-cysteinyl-[prolipoprotein] + sn-glycerol 1-phosphate + H(+). Its pathway is protein modification; lipoprotein biosynthesis (diacylglyceryl transfer). Catalyzes the transfer of the diacylglyceryl group from phosphatidylglycerol to the sulfhydryl group of the N-terminal cysteine of a prolipoprotein, the first step in the formation of mature lipoproteins. This Francisella tularensis subsp. tularensis (strain FSC 198) protein is Phosphatidylglycerol--prolipoprotein diacylglyceryl transferase.